The following is a 317-amino-acid chain: L-lactate dehydrogenase (317 aa).

NAD(+)-binding positions include V17, D38, K43, and 82-83; that span reads GA. Substrate contacts are provided by residues Q85, R91, and 123–126; that span reads NPVD. NAD(+) is bound by residues 121–123 and S146; that span reads VAN. 151 to 154 contributes to the substrate binding site; that stretch reads DSAR. Beta-D-fructose 1,6-bisphosphate contacts are provided by R156 and H171. H178 (proton acceptor) is an active-site residue. Position 224 is a phosphotyrosine (Y224). Position 233 (T233) interacts with substrate.

Belongs to the LDH/MDH superfamily. LDH family. Homotetramer.

It is found in the cytoplasm. It carries out the reaction (S)-lactate + NAD(+) = pyruvate + NADH + H(+). The protein operates within fermentation; pyruvate fermentation to lactate; (S)-lactate from pyruvate: step 1/1. With respect to regulation, allosterically activated by fructose 1,6-bisphosphate (FBP). Functionally, catalyzes the conversion of lactate to pyruvate. The sequence is that of L-lactate dehydrogenase from Moorella thermoacetica (strain ATCC 39073 / JCM 9320).